A 437-amino-acid chain; its full sequence is 3-phosphoshikimate 1-carboxyvinyltransferase (437 aa).

3-phosphoshikimate-binding residues include lysine 26, serine 27, and arginine 31. A phosphoenolpyruvate-binding site is contributed by lysine 26. The phosphoenolpyruvate site is built by glycine 99 and arginine 127. Residues serine 172, glutamine 174, aspartate 320, and lysine 347 each coordinate 3-phosphoshikimate. Glutamine 174 provides a ligand contact to phosphoenolpyruvate. Catalysis depends on aspartate 320, which acts as the Proton acceptor. 2 residues coordinate phosphoenolpyruvate: arginine 351 and arginine 392.

It belongs to the EPSP synthase family. In terms of assembly, monomer.

The protein resides in the cytoplasm. The catalysed reaction is 3-phosphoshikimate + phosphoenolpyruvate = 5-O-(1-carboxyvinyl)-3-phosphoshikimate + phosphate. It functions in the pathway metabolic intermediate biosynthesis; chorismate biosynthesis; chorismate from D-erythrose 4-phosphate and phosphoenolpyruvate: step 6/7. Functionally, catalyzes the transfer of the enolpyruvyl moiety of phosphoenolpyruvate (PEP) to the 5-hydroxyl of shikimate-3-phosphate (S3P) to produce enolpyruvyl shikimate-3-phosphate and inorganic phosphate. The sequence is that of 3-phosphoshikimate 1-carboxyvinyltransferase from Methylococcus capsulatus (strain ATCC 33009 / NCIMB 11132 / Bath).